Reading from the N-terminus, the 475-residue chain is Ribulose bisphosphate carboxylase large chain (475 aa).

Asn123 and Thr173 together coordinate substrate. The active-site Proton acceptor is Lys175. Residue Lys177 coordinates substrate. Residues Lys201, Asp203, and Glu204 each contribute to the Mg(2+) site. Position 201 is an N6-carboxylysine (Lys201). Residue His294 is the Proton acceptor of the active site. Arg295, His327, and Ser379 together coordinate substrate.

It belongs to the RuBisCO large chain family. Type I subfamily. Heterohexadecamer of 8 large chains and 8 small chains; disulfide-linked. The disulfide link is formed within the large subunit homodimers. Interacts with assembly factor Raf1 which helps form the holoenzyme, most interaction (and folding) occurs in the cytoplasm. Requires Mg(2+) as cofactor. Post-translationally, the disulfide bond which can form in the large chain dimeric partners within the hexadecamer appears to be associated with oxidative stress and protein turnover.

The protein localises to the carboxysome. The protein resides in the cytoplasm. It carries out the reaction 2 (2R)-3-phosphoglycerate + 2 H(+) = D-ribulose 1,5-bisphosphate + CO2 + H2O. The enzyme catalyses D-ribulose 1,5-bisphosphate + O2 = 2-phosphoglycolate + (2R)-3-phosphoglycerate + 2 H(+). RuBisCO catalyzes two reactions: the carboxylation of D-ribulose 1,5-bisphosphate, the primary event in carbon dioxide fixation, as well as the oxidative fragmentation of the pentose substrate in the photorespiration process. Both reactions occur simultaneously and in competition at the same active site. In Thermosynechococcus vestitus (strain NIES-2133 / IAM M-273 / BP-1), this protein is Ribulose bisphosphate carboxylase large chain.